A 420-amino-acid polypeptide reads, in one-letter code: Tyrosine--tRNA ligase (420 aa).

L-tyrosine is bound at residue Y33. Residues 38 to 47 (PTADSLHIGH) carry the 'HIGH' region motif. Y168 and Q172 together coordinate L-tyrosine. The short motif at 231–235 (KFGKT) is the 'KMSKS' region element. K234 is a binding site for ATP. The region spanning 353 to 419 (MLLVDALIKV…GKKNYYLVKL (67 aa)) is the S4 RNA-binding domain.

This sequence belongs to the class-I aminoacyl-tRNA synthetase family. TyrS type 1 subfamily. As to quaternary structure, homodimer.

It localises to the cytoplasm. It carries out the reaction tRNA(Tyr) + L-tyrosine + ATP = L-tyrosyl-tRNA(Tyr) + AMP + diphosphate + H(+). In terms of biological role, catalyzes the attachment of tyrosine to tRNA(Tyr) in a two-step reaction: tyrosine is first activated by ATP to form Tyr-AMP and then transferred to the acceptor end of tRNA(Tyr). This Desulfitobacterium hafniense (strain Y51) protein is Tyrosine--tRNA ligase.